The sequence spans 147 residues: MGNHLDGSYQPNMVMSIEDKQNKYNEAKERSKVCNKVYINQSGKIDKKELKRIKKLDFFYSQKNDDEIERMFFNMPNGTFLLTDDVTHENIYIAQKDLENGSLNIAKLEFKGEALYINGKNYFFLENYLKTFEDIYKYPLTNFNENK.

It belongs to the asfivirus MGF 100 family.

Plays a role in virus cell tropism, and may be required for efficient virus replication in macrophages. The protein is Protein MGF 100-3L of African swine fever virus (isolate Tick/Malawi/Lil 20-1/1983) (ASFV).